The following is a 38-amino-acid chain: Potassium channel toxin alpha-KTx 3.3 (38 aa).

3 cysteine pairs are disulfide-bonded: Cys8/Cys28, Cys14/Cys33, and Cys18/Cys35. Residues 26–33 are interaction with Ca(2+)-activated K(+) channels; it reads GKCMNRKC.

Belongs to the short scorpion toxin superfamily. Potassium channel inhibitor family. Alpha-KTx 03 subfamily. As to expression, expressed by the venom gland.

Its subcellular location is the secreted. In terms of biological role, potent inhibitor of shaker potassium channels as well as the mammalian homologs of shaker. The protein is Potassium channel toxin alpha-KTx 3.3 of Leiurus hebraeus (Hebrew deathstalker scorpion).